We begin with the raw amino-acid sequence, 562 residues long: Alpha-amylase 2 (562 aa).

Asn-236 is a binding site for Ca(2+). The Nucleophile role is filled by Asp-309. Catalysis depends on Glu-338, which acts as the Proton donor.

The protein belongs to the glycosyl hydrolase 13 family. As to quaternary structure, monomer. It depends on Ca(2+) as a cofactor.

It is found in the cytoplasm. It carries out the reaction Endohydrolysis of (1-&gt;4)-alpha-D-glucosidic linkages in polysaccharides containing three or more (1-&gt;4)-alpha-linked D-glucose units.. The polypeptide is Alpha-amylase 2 (amyB) (Dictyoglomus thermophilum (strain ATCC 35947 / DSM 3960 / H-6-12)).